We begin with the raw amino-acid sequence, 304 residues long: Phosphate transport system permease protein PstA 1 (304 aa).

A run of 6 helical transmembrane segments spans residues 36–56, 96–116, 132–152, 155–175, 204–224, and 276–296; these read FFFT…WVVI, AGVA…YLVE, VLAG…WIAT, FQQS…PVVV, IVRI…LLSI, and WGAA…AAMI. One can recognise an ABC transmembrane type-1 domain in the interval 89–297; the sequence is LYGTLVQAGV…TINLAAAMIR (209 aa).

Belongs to the binding-protein-dependent transport system permease family. CysTW subfamily.

It localises to the cell membrane. Its function is as follows. Part of the binding-protein-dependent transport system for phosphate; probably responsible for the translocation of the substrate across the membrane. The protein is Phosphate transport system permease protein PstA 1 (pstA1) of Mycobacterium tuberculosis (strain CDC 1551 / Oshkosh).